We begin with the raw amino-acid sequence, 118 residues long: NADH-ubiquinone oxidoreductase chain 3 (118 aa).

The next 3 helical transmembrane spans lie at 9–29, 62–82, and 87–107; these read IYLV…FLFA, LVSI…PWAV, and IDLF…IGFL.

It belongs to the complex I subunit 3 family.

It localises to the mitochondrion membrane. It carries out the reaction a ubiquinone + NADH + 5 H(+)(in) = a ubiquinol + NAD(+) + 4 H(+)(out). In terms of biological role, core subunit of the mitochondrial membrane respiratory chain NADH dehydrogenase (Complex I) that is believed to belong to the minimal assembly required for catalysis. Complex I functions in the transfer of electrons from NADH to the respiratory chain. The immediate electron acceptor for the enzyme is believed to be ubiquinone. The protein is NADH-ubiquinone oxidoreductase chain 3 (NAD3) of Pinus sylvestris (Scotch pine).